Reading from the N-terminus, the 474-residue chain is Glutathione synthetase (474 aa).

Arg125 serves as a coordination point for substrate. Glu144 serves as a coordination point for ATP. Residues Glu144 and Asn146 each contribute to the Mg(2+) site. Substrate is bound by residues 148 to 151 (IAAS), 214 to 216 (QRN), Gln220, and 267 to 270 (RTGY). Residues Lys305, 364-373 (KPQREGGGNN), Tyr375, 398-401 (MDKI), and Glu425 contribute to the ATP site. A Mg(2+)-binding site is contributed by Glu368. Arg450 contributes to the substrate binding site. ATP is bound by residues Lys452 and Asp458. Position 461 to 462 (461 to 462 (VA)) interacts with substrate.

The protein belongs to the eukaryotic GSH synthase family. In terms of assembly, homodimer. Mg(2+) serves as cofactor. Expressed ubiquitously.

The catalysed reaction is gamma-L-glutamyl-L-cysteine + glycine + ATP = glutathione + ADP + phosphate + H(+). It catalyses the reaction gamma-L-glutamyl-(2S)-2-aminobutanoate + glycine + ATP = ophthalmate + ADP + phosphate + H(+). Its pathway is sulfur metabolism; glutathione biosynthesis; glutathione from L-cysteine and L-glutamate: step 2/2. Catalyzes the production of glutathione from gamma-glutamylcysteine and glycine in an ATP-dependent manner. Glutathione (gamma-glutamylcysteinylglycine, GSH) is the most abundant intracellular thiol in living aerobic cells and is required for numerous processes including the protection of cells against oxidative damage, amino acid transport, the detoxification of foreign compounds, the maintenance of protein sulfhydryl groups in a reduced state and acts as a cofactor for a number of enzymes. Participates in ophthalmate biosynthesis in hepatocytes. This chain is Glutathione synthetase, found in Xenopus laevis (African clawed frog).